Consider the following 275-residue polypeptide: Phosphate import ATP-binding protein PstB (275 aa).

The region spanning 29–270 is the ABC transporter domain; sequence VSVRDLNFYY…PTDRRTQDYI (242 aa). 61 to 68 lines the ATP pocket; sequence GPSGCGKS.

The protein belongs to the ABC transporter superfamily. Phosphate importer (TC 3.A.1.7) family. As to quaternary structure, the complex is composed of two ATP-binding proteins (PstB), two transmembrane proteins (PstC and PstA) and a solute-binding protein (PstS).

It localises to the cell inner membrane. It carries out the reaction phosphate(out) + ATP + H2O = ADP + 2 phosphate(in) + H(+). Functionally, part of the ABC transporter complex PstSACB involved in phosphate import. Responsible for energy coupling to the transport system. This chain is Phosphate import ATP-binding protein PstB, found in Rhodopseudomonas palustris (strain BisB18).